A 602-amino-acid polypeptide reads, in one-letter code: Sodium-independent sulfate anion transporter (602 aa).

Topologically, residues 1 to 47 (MSPPMSPMKPPKGFAPMSCCWSTETMQKWLPFLGWLPDYTWYALKMD) are extracellular. A helical transmembrane segment spans residues 48 to 68 (FIAGISVGLTVIPQALAYAEV). Alanine 69 is a topological domain (cytoplasmic). The chain crosses the membrane as a helical span at residues 70–90 (GLPPQYGLYSAFMGCFVYFFL). Over 91–115 (GTSRDVTLGPTAIMSLLVSFYTFHE) the chain is Extracellular. Residues 116 to 136 (PAYAVLLAFLTGCIQLGMGFL) traverse the membrane as a helical segment. Topologically, residues 137 to 143 (RLGLLLD) are cytoplasmic. The chain crosses the membrane as a helical span at residues 144–164 (FISCPVIKGFTSAAAIIIGFG). Over 165 to 193 (QIKNLLGLQHIPRQFFLQVYYTFHNIGET) the chain is Extracellular. Residues 194–214 (RVGDAVLGLVCMVLLLVLKLM) form a helical membrane-spanning segment. Residues 215–246 (RDHVPPVHPEMPTGVRLSHGLVWTATTARNAL) are Cytoplasmic-facing. The helical transmembrane segment at 247–267 (VVSFAALVAYSFQVTGYQPFV) threads the bilayer. The Extracellular portion of the chain corresponds to 268–300 (LTGKTPEGLPDAHIPPFSVTTANGTISFTEMVQ). Residues 301–321 (GMGAGLVVVPLMGLLESIAVA) form a helical membrane-spanning segment. The Cytoplasmic portion of the chain corresponds to 322–337 (KSFASQNNYRINSNQE). The chain crosses the membrane as a helical span at residues 338–358 (LLALGFTNILGSLFSSYPVTG). Residues 359–370 (SFGRTAVNAQSG) are Extracellular-facing. The helical transmembrane segment at 371–391 (VCTPAGGLMTGALVLLSLDYL) threads the bilayer. At 392–394 (TSL) the chain is on the cytoplasmic side. A helical membrane pass occupies residues 395–415 (FYYIPKSALAAVIIMAVVPLF). At 416-438 (DTKIVKTLWRVKRLDLLPLCVTF) the chain is on the extracellular side. A helical transmembrane segment spans residues 439–459 (LLCFWEVQYGILAGTLVSVLI). At 460 to 602 (LLHSVARPKI…PEHKIALLKA (143 aa)) the chain is on the cytoplasmic side. The STAS domain occupies 466 to 580 (RPKIQVSEGP…EAEKYLKQEP (115 aa)).

It belongs to the SLC26A/SulP transporter (TC 2.A.53) family.

It localises to the cell membrane. It is found in the lysosome membrane. The protein localises to the apical cell membrane. Its subcellular location is the basolateral cell membrane. The catalysed reaction is hydrogencarbonate(in) + chloride(out) = hydrogencarbonate(out) + chloride(in). It catalyses the reaction sulfate(in) + H(+)(in) = sulfate(out) + H(+)(out). It carries out the reaction oxalate(in) + chloride(out) = oxalate(out) + chloride(in). In terms of biological role, sodium-independent anion exchanger mediating bicarbonate, chloride, sulfate and oxalate transport. Exhibits sodium-independent sulfate anion transporter activity that may cooperate with SLC26A2 to mediate DIDS-sensitive sulfate uptake into high endothelial venules endothelial cells (HEVEC). In the kidney, mediates chloride-bicarbonate exchange, facilitating V-ATPase-mediated acid secretion. May function as a chloride channel, playing an important role in moderating chloride homeostasis and neuronal activity in the cerebellum. This chain is Sodium-independent sulfate anion transporter, found in Bos taurus (Bovine).